The chain runs to 393 residues: Putative amino-acid ABC transporter permease protein YhdX (393 aa).

A run of 8 helical transmembrane segments spans residues 21 to 41 (AWLFQILAVVAVVGIVGWLFH), 92 to 112 (LLVSALCIVFASVLGFFIGLA), 128 to 148 (IEIFRNIPPLLQIFFWYFAVL), 180 to 200 (DGFIAFILAVVMAIVLSVGLF), 219 to 239 (IAAVLIIGLPLLAQWLFGAAL), 256 to 276 (VLIPELAALTLALSVYTSAFI), 333 to 353 (SSLAAAIGYPDMVSLFAGTVL), and 363 to 383 (IAMTMSVYLIISLTISLLMNI). Residues 88–381 (LLNTLLVSAL…IISLTISLLM (294 aa)) enclose the ABC transmembrane type-1 domain.

This sequence belongs to the binding-protein-dependent transport system permease family. HisMQ subfamily.

It localises to the cell inner membrane. Probably part of the binding-protein-dependent transport system YdhWXYZ for an amino acid; probably responsible for the translocation of the substrate across the membrane. This is Putative amino-acid ABC transporter permease protein YhdX (yhdX) from Escherichia coli (strain K12).